The following is a 5068-amino-acid chain: Protein piccolo (5068 aa).

Residues 1–20 are compositionally biased toward low complexity; the sequence is MGNEASLEGEGLPEGLAAAA. Disordered stretches follow at residues 1–143 and 173–524; these read MGNE…DFKE and FDLI…QAPA. Residues 93–102 are compositionally biased toward pro residues; the sequence is PGKPPDPGRP. 3 stretches are compositionally biased toward basic and acidic residues: residues 111–122, 133–143, and 185–199; these read RTTDTFRSEQKL, KESKSRTDFKE, and ETTK…DQGK. Position 212 is a phosphoserine (serine 212). Over residues 232 to 241 the composition is skewed to polar residues; sequence PSKSVSSQQA. Residues 252 to 279 show a composition bias toward low complexity; that stretch reads AKPSQQSPAQTPAQQAKPVAQQPGPAKA. Polar residues predominate over residues 319–334; that stretch reads TSLQQPGPKSLAQTPG. Pro residues-rich tracts occupy residues 391–407 and 416–487; these read PTKP…PQPQ and PQQP…PQPQ. Residues 401-500 form a 10 X 10 AA tandem approximate repeats of P-A-K-P-Q-P-Q-Q-P-X region; the sequence is PAKPQPQQPV…LGKPSAQQPS (100 aa). Over residues 495–508 the composition is skewed to polar residues; it reads SAQQPSKSISQTVT. Residues 515–524 show a composition bias toward low complexity; that stretch reads PPTSAAQAPA. The segment at 532 to 556 adopts a C4-type zinc-finger fold; that stretch reads CPLCNTTELLLHTPEKANFNTCTEC. Disordered stretches follow at residues 594–867, 883–1005, 1057–1345, and 1364–1803; these read AAIP…TVTG, LIST…TELN, LGDM…PSDL, and VGEK…SDPE. Residues 610–625 show a composition bias toward polar residues; that stretch reads QPATASKSPVPSQQAS. The span at 626–644 shows a compositional bias: basic and acidic residues; the sequence is PKKELPSKQDSPKAPESKK. Residues 709–738 are compositionally biased toward low complexity; sequence SPSSAAATSKPAILSSQVQAQAQVTTAPPL. The span at 782–795 shows a compositional bias: basic and acidic residues; the sequence is ESKDPVQKKEEPKK. The segment covering 809–830 has biased composition (low complexity); sequence VPKGSPTPSGTRPTTGQATPQS. Phosphoserine occurs at positions 844 and 856. Composition is skewed to polar residues over residues 856-865 and 883-893; these read SQPTTPQETV and LISTAGQQAPH. Position 860 is a phosphothreonine (threonine 860). The segment at 997-1020 adopts a C4-type zinc-finger fold; the sequence is CPLCRTELNVGSQDPPNFNTCTEC. Positions 1073 to 1085 are enriched in pro residues; that stretch reads SPVPAPAEPPPQK. Basic and acidic residues predominate over residues 1097–1116; it reads KETEVKAETEKQIPEKETPS. Threonine 1120 is modified (phosphothreonine). Composition is skewed to basic and acidic residues over residues 1144–1165, 1172–1186, 1244–1253, and 1262–1283; these read PEKK…KKPP, LEEK…KLPP, PKDRQKESRD, and TAKE…DKSD. A compositionally biased stretch (polar residues) spans 1290–1306; sequence PKSPQGLSDTGYSSDGI. Serine 1292, serine 1302, serine 1303, serine 1332, serine 1334, serine 1337, serine 1338, and serine 1341 each carry phosphoserine. Positions 1319-1333 are enriched in basic and acidic residues; the sequence is SDEKDLLKGLKKDSF. A compositionally biased stretch (low complexity) spans 1334–1343; sequence SQESSPSSPS. Polar residues predominate over residues 1374–1392; it reads PQKVSPEQPQDQQKTQTPS. The span at 1405–1444 shows a compositional bias: basic and acidic residues; the sequence is KESQEKKVTSKKDSAQGFPSRKEHKENPELVDDLSPRRAS. Phosphoserine occurs at positions 1439, 1451, 1452, 1454, 1457, 1481, 1484, 1505, and 1507. Acidic residues predominate over residues 1499-1511; that stretch reads SADEDASGSEDEE. Threonine 1552 is modified (phosphothreonine). Phosphoserine occurs at positions 1553, 1563, and 1575. A compositionally biased stretch (acidic residues) spans 1566-1575; the sequence is DEDDETFDES. Basic and acidic residues predominate over residues 1576–1587; it reads PELKFRETKSQE. Residues 1606-1624 show a composition bias toward polar residues; that stretch reads ELNSTVTDKYSAESSQKKT. The segment covering 1628–1638 has biased composition (acidic residues); the sequence is FDEEPELEMES. Serine 1638 is modified (phosphoserine). Threonine 1640 bears the Phosphothreonine mark. Phosphoserine occurs at positions 1642 and 1647. Residues 1650-1667 show a composition bias toward polar residues; that stretch reads EGSSSLHASSFTPGTSPT. The span at 1707-1720 shows a compositional bias: acidic residues; that stretch reads DSSEEEELREEEEL. A phosphoserine mark is found at serine 1708 and serine 1709. Positions 1721 to 1734 are enriched in basic and acidic residues; the sequence is LKEQEKQRELEQQQ. Threonine 1760 is subject to Phosphothreonine. A Phosphoserine modification is found at serine 1766. The span at 1775–1790 shows a compositional bias: basic and acidic residues; that stretch reads EELRQAAEMEELHRSS. Phosphoserine occurs at positions 1795, 1800, 1808, and 1829. Disordered regions lie at residues 2104–2126 and 2261–2377; these read PSES…ISSV and EAEL…AAAA. Low complexity predominate over residues 2109–2126; the sequence is TSVPPSDTPSLTSSISSV. Over residues 2277–2291 the composition is skewed to polar residues; sequence TPSSQTKEQPGSPHS. Pro residues predominate over residues 2334 to 2368; it reads QPPPPPPPPPPPPPPPPPPPPPPLPPATSPKPPTY. At serine 2495 the chain carries Phosphoserine. The O-linked (GlcNAc) threonine glycan is linked to threonine 2686. An O-linked (GlcNAc) serine glycan is attached at serine 2960. Phosphothreonine is present on threonine 2998. 2 disordered regions span residues 3334 to 3443 and 3490 to 3556; these read KEEK…SKVS and KGGS…LYSP. The residue at position 3358 (serine 3358) is a Phosphoserine. The span at 3361–3370 shows a compositional bias: basic and acidic residues; that stretch reads DDPRNLKKIV. Serine 3372 carries the phosphoserine modification. Phosphothreonine occurs at positions 3376 and 3403. Positions 3403-3412 are enriched in acidic residues; sequence TDDEDQDEWD. A compositionally biased stretch (polar residues) spans 3495 to 3507; the sequence is GCQTETDPDTQSP. Residues serine 3506, serine 3514, serine 3545, serine 3549, serine 3555, serine 3558, serine 3561, serine 3582, serine 3608, serine 3610, and serine 3616 each carry the phosphoserine modification. 2 disordered regions span residues 3576–3679 and 3760–3797; these read PLPD…RRRM and DYMS…QFIP. Composition is skewed to polar residues over residues 3636 to 3645 and 3661 to 3673; these read KGSQTTSGTQ and STGT…TMGT. Phosphoserine is present on serine 3763. Over residues 3773–3785 the composition is skewed to basic and acidic residues; that stretch reads SRVESQHGIERPR. Polar residues predominate over residues 3787–3797; it reads APQTEFSQFIP. A phosphoserine mark is found at serine 4016, serine 4042, and serine 4132. 2 disordered regions span residues 4207-4231 and 4254-4273; these read ADKP…GLDL and VSFG…LPIS. Residues 4210 to 4231 show a composition bias toward low complexity; sequence PYSSGSRSRPSSRPSSVYGLDL. A compositionally biased stretch (polar residues) spans 4257 to 4273; the sequence is GHSSSSARTKPTSLPIS. A phosphoserine mark is found at serine 4286, serine 4290, serine 4293, serine 4322, and serine 4358. The tract at residues 4317-4339 is disordered; it reads RDQFGSSHSLPEVQQHMREESRT. In terms of domain architecture, PDZ spans 4424–4518; that stretch reads RIKITRDSKD…EAEICVRLDL (95 aa). A disordered region spans residues 4574-4620; sequence KGAHAHSGPTSAGSSSVPSPGQPGSPSVSKKKHGGSKPTDVSKTASH. Residues 4578-4601 show a composition bias toward low complexity; sequence AHSGPTSAGSSSVPSPGQPGSPSV. Serine 4592 bears the Phosphoserine mark. The 130-residue stretch at 4622 to 4751 folds into the C2 1 domain; the sequence is ITGEIQLQIN…SHLDNTPRWY (130 aa). Residues aspartate 4651 and aspartate 4657 each coordinate Ca(2+). Phosphoserine is present on serine 4706. Ca(2+) is bound by residues aspartate 4721, aspartate 4723, serine 4726, and aspartate 4729. Disordered stretches follow at residues 4758-4834 and 4857-4891; these read ESIE…SVAQ and QPTK…SEGS. Low complexity-rich tracts occupy residues 4766-4778 and 4805-4815; these read HSSQ…PKPS and SSPGSSKSSSE. The span at 4823–4834 shows a compositional bias: polar residues; sequence PSRSQSKTSVAQ. Positions 4870–4891 are enriched in low complexity; the sequence is SVSTGSSGSSVGSGYSVDSEGS. Positions 4933 to 5058 constitute a C2 2 domain; that stretch reads VMGEIKLALK…DLRKRIVNWH (126 aa).

Interacts with BSN, ERC2/CAST1, RIMS1 and UNC13A. Interacts (via C-terminus) with TRIO (via N-terminus). Interacts with CTBP1. Interacts with SIAH1; this interaction negatively regulates SIAH1 E3 ligase activity. Directly interacts with GIT1 and GIT2. Requires Ca(2+) as cofactor. As to expression, highly expressed in brain. Moderately expressed in pituitary gland and pancreatic islets. Low levels found in stomach.

The protein resides in the presynaptic active zone. Functionally, scaffold protein of the presynaptic cytomatrix at the active zone (CAZ) which is the place in the synapse where neurotransmitter is released. After synthesis, participates in the formation of Golgi-derived membranous organelles termed Piccolo-Bassoon transport vesicles (PTVs) that are transported along axons to sites of nascent synaptic contacts. At the presynaptic active zone, regulates the spatial organization of synaptic vesicle cluster, the protein complexes that execute membrane fusion and compensatory endocytosis. Organizes as well the readily releasable pool of synaptic vesicles and safeguards a fraction of them to be not immediately available for action potential-induced release. Also functions in processes other than assembly such as the regulation of specific presynaptic protein ubiquitination by interacting with SIAH1 or the regulation of presynaptic autophagy. Also mediates synapse to nucleus communication leading to reconfiguration of gene expression by associating with the transcriptional corepressor CTBP1 and by subsequently reducing the size of its pool available for nuclear import. The sequence is that of Protein piccolo from Mus musculus (Mouse).